The primary structure comprises 210 residues: Putative polysaccharide-binding protein (210 aa).

The signal sequence occupies residues 1 to 22 (MGFLKGTAAALTLLSAAAAASA). CBM1 domains lie at 23–62 (CGVL…AMPG), 63–105 (MMGQ…LANK), 125–165 (CGKE…APPP), and 166–210 (KMGE…PMHP).

This is Putative polysaccharide-binding protein from Porphyra purpurea (Red seaweed).